Reading from the N-terminus, the 275-residue chain is Large ribosomal subunit protein uL2c (275 aa).

Disordered regions lie at residues Met-1–Lys-30 and Met-225–Lys-275. Residues Gln-21–Lys-30 are compositionally biased toward polar residues.

This sequence belongs to the universal ribosomal protein uL2 family. As to quaternary structure, part of the 50S ribosomal subunit.

The protein resides in the plastid. Its subcellular location is the chloroplast. This chain is Large ribosomal subunit protein uL2c (rpl2), found in Illicium oligandrum (Star anise).